A 174-amino-acid chain; its full sequence is MTLILGIDPGSRITGYGVVRQTARGCEYVASGCIRTGSGELHERLQIVFRGVSEIIAQHGPVTMGIERVFMARNADSALKLGQARGAAIVAAAEAGLEIAEYSATQVKQAVAGTGGANKEQVMMMVMHLLKLTQKPQIDASDALAIALCHAHTRSSLVPHGLSTARRRGGRLRL.

Residues Asp-8, Glu-67, and Asp-139 contribute to the active site. Residues Asp-8, Glu-67, and Asp-139 each coordinate Mg(2+).

The protein belongs to the RuvC family. As to quaternary structure, homodimer which binds Holliday junction (HJ) DNA. The HJ becomes 2-fold symmetrical on binding to RuvC with unstacked arms; it has a different conformation from HJ DNA in complex with RuvA. In the full resolvosome a probable DNA-RuvA(4)-RuvB(12)-RuvC(2) complex forms which resolves the HJ. Mg(2+) serves as cofactor.

The protein localises to the cytoplasm. The catalysed reaction is Endonucleolytic cleavage at a junction such as a reciprocal single-stranded crossover between two homologous DNA duplexes (Holliday junction).. Functionally, the RuvA-RuvB-RuvC complex processes Holliday junction (HJ) DNA during genetic recombination and DNA repair. Endonuclease that resolves HJ intermediates. Cleaves cruciform DNA by making single-stranded nicks across the HJ at symmetrical positions within the homologous arms, yielding a 5'-phosphate and a 3'-hydroxyl group; requires a central core of homology in the junction. The consensus cleavage sequence is 5'-(A/T)TT(C/G)-3'. Cleavage occurs on the 3'-side of the TT dinucleotide at the point of strand exchange. HJ branch migration catalyzed by RuvA-RuvB allows RuvC to scan DNA until it finds its consensus sequence, where it cleaves and resolves the cruciform DNA. This chain is Crossover junction endodeoxyribonuclease RuvC, found in Pseudomonas putida (strain ATCC 700007 / DSM 6899 / JCM 31910 / BCRC 17059 / LMG 24140 / F1).